Here is a 154-residue protein sequence, read N- to C-terminus: 6,7-dimethyl-8-ribityllumazine synthase (154 aa).

5-amino-6-(D-ribitylamino)uracil-binding positions include F22, 56 to 58 (AFE), and 80 to 82 (TVI). 85–86 (AT) provides a ligand contact to (2S)-2-hydroxy-3-oxobutyl phosphate. Catalysis depends on H88, which acts as the Proton donor. Residue F113 coordinates 5-amino-6-(D-ribitylamino)uracil. Residue R127 participates in (2S)-2-hydroxy-3-oxobutyl phosphate binding.

It belongs to the DMRL synthase family. Forms an icosahedral capsid composed of 60 subunits, arranged as a dodecamer of pentamers.

The enzyme catalyses (2S)-2-hydroxy-3-oxobutyl phosphate + 5-amino-6-(D-ribitylamino)uracil = 6,7-dimethyl-8-(1-D-ribityl)lumazine + phosphate + 2 H2O + H(+). The protein operates within cofactor biosynthesis; riboflavin biosynthesis; riboflavin from 2-hydroxy-3-oxobutyl phosphate and 5-amino-6-(D-ribitylamino)uracil: step 1/2. In terms of biological role, catalyzes the formation of 6,7-dimethyl-8-ribityllumazine by condensation of 5-amino-6-(D-ribitylamino)uracil with 3,4-dihydroxy-2-butanone 4-phosphate. This is the penultimate step in the biosynthesis of riboflavin. The polypeptide is 6,7-dimethyl-8-ribityllumazine synthase (Bacillus licheniformis (strain ATCC 14580 / DSM 13 / JCM 2505 / CCUG 7422 / NBRC 12200 / NCIMB 9375 / NCTC 10341 / NRRL NRS-1264 / Gibson 46)).